The sequence spans 745 residues: UPF0508 protein YJR030C (745 aa).

The protein belongs to the UPF0508 family.

The polypeptide is UPF0508 protein YJR030C (Saccharomyces cerevisiae (strain ATCC 204508 / S288c) (Baker's yeast)).